Consider the following 682-residue polypeptide: Guanylate cyclase soluble subunit beta-2 (682 aa).

Position 43 (H43) interacts with heme. In terms of domain architecture, Guanylate cyclase spans 408–536 (TILFSDVVTF…DTVNTASRME (129 aa)). The interval 592–667 (MGRPSAPADG…QPSPDETKTS (76 aa)) is disordered. A compositionally biased stretch (polar residues) spans 649-667 (RNSTDAVNNQPSPDETKTS).

This sequence belongs to the adenylyl cyclase class-4/guanylyl cyclase family. In terms of assembly, heterodimer of an alpha and a beta chain. The cofactor is heme. As to expression, kidney and liver.

The protein localises to the cytoplasm. It catalyses the reaction GTP = 3',5'-cyclic GMP + diphosphate. Its activity is regulated as follows. Activated by nitric oxide in the presence of magnesium or manganese ions. In Rattus norvegicus (Rat), this protein is Guanylate cyclase soluble subunit beta-2 (Gucy1b2).